A 599-amino-acid chain; its full sequence is NTPase KAP family P-loop domain-containing protein 1 (599 aa).

Residues 1-416 form the KAP NTPase domain; it reads MQQEAAQRES…NTVPITVRLL (416 aa). 3 helical membrane-spanning segments follow: residues 25-45, 119-139, and 156-176; these read GWGV…ITEL, VCLA…LLYL, and ALGG…VYSV. The interval 543-599 is disordered; sequence ALKPPSPPKSPSQDGPQASPRAIIAAGTSHAGQGSGHSKEAHQTRDRTHGGKPRPMA. A compositionally biased stretch (basic and acidic residues) spans 579 to 591; that stretch reads HSKEAHQTRDRTH.

It localises to the membrane. The polypeptide is NTPase KAP family P-loop domain-containing protein 1 (Nkpd1) (Mus musculus (Mouse)).